The primary structure comprises 104 residues: Large ribosomal subunit protein uL24 (104 aa).

This sequence belongs to the universal ribosomal protein uL24 family. As to quaternary structure, part of the 50S ribosomal subunit.

Its function is as follows. One of two assembly initiator proteins, it binds directly to the 5'-end of the 23S rRNA, where it nucleates assembly of the 50S subunit. In terms of biological role, one of the proteins that surrounds the polypeptide exit tunnel on the outside of the subunit. This chain is Large ribosomal subunit protein uL24, found in Bradyrhizobium sp. (strain BTAi1 / ATCC BAA-1182).